The primary structure comprises 108 residues: MMKGGMAGLMKQAQQMQEKMQKMQEELANAEVTGQSGAGLVSVVMTGRHDVKRITLDDSLMQEDKEVLEDLIAAAVNDAVRKVEQNSQEKMAGMTAGMQLPPGFKMPF.

Positions 1-25 (MMKGGMAGLMKQAQQMQEKMQKMQE) are disordered.

This sequence belongs to the YbaB/EbfC family. Homodimer.

It is found in the cytoplasm. The protein resides in the nucleoid. In terms of biological role, binds to DNA and alters its conformation. May be involved in regulation of gene expression, nucleoid organization and DNA protection. This Ectopseudomonas mendocina (strain ymp) (Pseudomonas mendocina) protein is Nucleoid-associated protein Pmen_2646.